A 357-amino-acid polypeptide reads, in one-letter code: Arginine kinase Scy p 2.0101 (357 aa).

The region spanning 9–91 (KLEEGFKKLE…FDPIIEDYHK (83 aa)) is the Phosphagen kinase N-terminal domain. 64-68 (GVGVY) is an L-arginine binding site. IgE-binding and beta-hexosaminidase release from rat basophilic leukemia (RBL) cells regions lie at residues 113 to 127 (VDPD…RVRC) and 127 to 155 (CGRS…VSST). One can recognise a Phosphagen kinase C-terminal domain in the interval 119–356 (FVISTRVRCG…LELIKIEKEM (238 aa)). 122–126 (STRVR) is a binding site for ATP. Histidine 185 is a binding site for ATP. A disulfide bridge connects residues cysteine 201 and cysteine 271. Residues 204–218 (WPTGRGIYHNDNKTF) are igE-binding and beta-hexosaminidase release from rat basophilic leukemia (RBL) cells. The segment at 211–225 (YHNDNKTFLVWCNEE) is igE-binding, but no beta-hexosaminidase release from rat basophilic leukemia (RBL) cells. An L-arginine-binding site is contributed by glutamate 225. An ATP-binding site is contributed by arginine 229. Cysteine 271 provides a ligand contact to L-arginine. ATP contacts are provided by residues 280 to 284 (RASVH) and 309 to 314 (RGTRGE). Residue glutamate 314 participates in L-arginine binding. The igE-binding, but no beta-hexosaminidase release from rat basophilic leukemia (RBL) cells stretch occupies residues 316–330 (TEAEGGVYDISNKRR).

Belongs to the ATP:guanido phosphotransferase family. In terms of processing, glycosylated. As to expression, muscle (at protein level).

It carries out the reaction L-arginine + ATP = N(omega)-phospho-L-arginine + ADP + H(+). In terms of biological role, catalyzes the reversible transfer of high energy ATP gamma-phosphate group to L-arginine. This Scylla paramamosain (Mud crab) protein is Arginine kinase Scy p 2.0101.